Reading from the N-terminus, the 236-residue chain is Pyridoxine 5'-phosphate synthase (236 aa).

N6 serves as a coordination point for 3-amino-2-oxopropyl phosphate. 8–9 (DH) serves as a coordination point for 1-deoxy-D-xylulose 5-phosphate. 3-amino-2-oxopropyl phosphate is bound at residue R17. The active-site Proton acceptor is the H42. The 1-deoxy-D-xylulose 5-phosphate site is built by R44 and H49. Catalysis depends on E69, which acts as the Proton acceptor. T99 lines the 1-deoxy-D-xylulose 5-phosphate pocket. The Proton donor role is filled by H190. 3-amino-2-oxopropyl phosphate is bound by residues G191 and 212-213 (GH).

The protein belongs to the PNP synthase family. As to quaternary structure, homooctamer; tetramer of dimers.

It localises to the cytoplasm. It catalyses the reaction 3-amino-2-oxopropyl phosphate + 1-deoxy-D-xylulose 5-phosphate = pyridoxine 5'-phosphate + phosphate + 2 H2O + H(+). It participates in cofactor biosynthesis; pyridoxine 5'-phosphate biosynthesis; pyridoxine 5'-phosphate from D-erythrose 4-phosphate: step 5/5. Its function is as follows. Catalyzes the complicated ring closure reaction between the two acyclic compounds 1-deoxy-D-xylulose-5-phosphate (DXP) and 3-amino-2-oxopropyl phosphate (1-amino-acetone-3-phosphate or AAP) to form pyridoxine 5'-phosphate (PNP) and inorganic phosphate. The polypeptide is Pyridoxine 5'-phosphate synthase (Chlorobium phaeobacteroides (strain DSM 266 / SMG 266 / 2430)).